The following is a 370-amino-acid chain: Germination protease (370 aa).

The propeptide occupies 1-15; the sequence is MEKELDLSQYSVRTD.

This sequence belongs to the peptidase A25 family. As to quaternary structure, homotetramer. Post-translationally, autoproteolytically processed. The inactive tetrameric zymogen termed p46 autoprocesses to a smaller form termed p41, which is active only during spore germination.

It catalyses the reaction Endopeptidase action with P4 Glu or Asp, P1 preferably Glu &gt; Asp, P1' hydrophobic and P2' Ala.. In terms of biological role, initiates the rapid degradation of small, acid-soluble proteins during spore germination. This Priestia megaterium (strain ATCC 12872 / QMB1551) (Bacillus megaterium) protein is Germination protease (gpr).